The chain runs to 484 residues: Monocarboxylate transporter 2 (484 aa).

Residues 1–16 (MPSETAVPPPHPIPPD) lie on the Cytoplasmic side of the membrane. Residues 17–37 (GGWGWVVVGAAFISIGFSYAF) form a helical membrane-spanning segment. Topologically, residues 38 to 60 (PKAVTVFFKDIQQIFQASYSEIA) are extracellular. Residues 61-81 (WISSIMLAVMYAGGPISSVLV) form a helical membrane-spanning segment. Residues 82–87 (NNYGSR) are Cytoplasmic-facing. Residues 88 to 108 (PVVIIGGLLCCTGMILASFSN) traverse the membrane as a helical segment. The Extracellular portion of the chain corresponds to 109–116 (SVLELYLT). A helical transmembrane segment spans residues 117–137 (IGFIGGLGLAFNLQPALTIIG). Over 138–144 (KYFYRRR) the chain is Cytoplasmic. A helical membrane pass occupies residues 145–165 (PMANGLAMAGSPVFLSSLAPF). At 166–174 (NQYLFNSYG) the chain is on the extracellular side. Residues 175 to 195 (WKGSFLILGGIFLHSCVAGCL) form a helical membrane-spanning segment. Topologically, residues 196–245 (MRPVQTSPRKSKSKSKVGSRQDGSMKKASKVSTAEKINRFLDFSLFKHRG) are cytoplasmic. Residues 201–224 (TSPRKSKSKSKVGSRQDGSMKKAS) are disordered. The chain crosses the membrane as a helical span at residues 246–266 (FLIYLSGNVIMFLGFFAPIIF). Residues 267-282 (LAPYAKDKGVDEYNAA) are Extracellular-facing. Residues 283–303 (LLLSVMAFVDMFARPTGGLIA) traverse the membrane as a helical segment. At 304-311 (NSKLIRPR) the chain is on the cytoplasmic side. Residues 312-332 (IQYFFSFAIVFTGICHLLCPL) form a helical membrane-spanning segment. The Extracellular portion of the chain corresponds to 333–337 (ADTYP). The helical transmembrane segment at 338–358 (ALVVYSIFFGYGFGSVSSVLF) threads the bilayer. Topologically, residues 359 to 372 (ETLMDLVGPARFSS) are cytoplasmic. A helical membrane pass occupies residues 373–393 (AVGLATIVECCPVLLGPPLAG). At 394-405 (KLVDKTKDYKYM) the chain is on the extracellular side. The chain crosses the membrane as a helical span at residues 406–426 (YIASGTIVVISGIYLFIGNAI). At 427 to 484 (NYRLLAKERKREKARKKKSATHPSRESEALSRSKQDDVSVKVSNPHNSPSDRERESNI) the chain is on the cytoplasmic side. The disordered stretch occupies residues 437–484 (REKARKKKSATHPSRESEALSRSKQDDVSVKVSNPHNSPSDRERESNI). Composition is skewed to basic and acidic residues over residues 449-465 (PSRE…DDVS) and 475-484 (PSDRERESNI).

This sequence belongs to the major facilitator superfamily. Monocarboxylate porter (TC 2.A.1.13) family. Homodimer. Interacts with GRID2IP. Interacts with EMB; interaction mediates SLC16A7 targeting to the plasma membrane. Interacts with isoform 2 of BSG. In terms of tissue distribution, abundant on the surface of hepatocytes. Present on parietal cells of the oxyntic gland of the stomach, on the basolateral surface of epithelial cells in the collecting ducts of the kidney, on sperm tails throughout the epididymis. Expressed in mitochondria-rich skeletal muscle fibers and cardiac myocytes (at protein level).

The protein localises to the cell membrane. The protein resides in the basolateral cell membrane. It is found in the cytoplasm. It catalyses the reaction pyruvate(out) + H(+)(out) = pyruvate(in) + H(+)(in). The enzyme catalyses 3-methyl-2-oxobutanoate(out) + H(+)(out) = 3-methyl-2-oxobutanoate(in) + H(+)(in). It carries out the reaction (S)-lactate(in) + H(+)(in) = (S)-lactate(out) + H(+)(out). The catalysed reaction is acetoacetate(out) + H(+)(out) = acetoacetate(in) + H(+)(in). It catalyses the reaction (R)-3-hydroxybutanoate(out) + H(+)(out) = (R)-3-hydroxybutanoate(in) + H(+)(in). The enzyme catalyses 4-methyl-2-oxopentanoate(out) + H(+)(out) = 4-methyl-2-oxopentanoate(in) + H(+)(in). It carries out the reaction (S)-3-hydroxybutanoate(out) + H(+)(out) = (S)-3-hydroxybutanoate(in) + H(+)(in). Its activity is regulated as follows. Transport activity exhibits steep dependence on substrate concentration. Substrate concentration sensitivity of SLC16A7 arises from the strong inter-subunit cooperativity of the SLC16A7 dimer during transport. Inhibited by AR-C155858. In terms of biological role, proton-coupled monocarboxylate symporter. Catalyzes the rapid transport across the plasma membrane of monocarboxylates such as L-lactate, pyruvate and ketone bodies, acetoacetate, beta-hydroxybutyrate and acetate. Dimerization is functionally required and both subunits work cooperatively in transporting substrate. This Mesocricetus auratus (Golden hamster) protein is Monocarboxylate transporter 2 (SLC16A7).